An 852-amino-acid chain; its full sequence is Disease resistance RPP13-like protein 4 (852 aa).

A coiled-coil region spans residues leucine 17–leucine 68. Residues arginine 149, valine 161, glycine 189–threonine 196, arginine 297, and lysine 363 contribute to the ADP site. Residues glutamate 164–glutamate 410 enclose the NB-ARC domain. LRR repeat units follow at residues cysteine 558–glutamate 581, leucine 585–leucine 609, phenylalanine 633–leucine 657, leucine 683–serine 706, leucine 763–asparagine 786, and leucine 798–asparagine 824.

Belongs to the disease resistance NB-LRR family. RPP13 subfamily. As to quaternary structure, interacts with ZED1/ZRK5. Component of a stable high-order oligomeric complex made of RKS1 and RPP13L4/ZAR1 which recruits ZED1-related kinases (e.g. uridylylated PBL2 and acetylated ZED1/ZRK5) in the presence of ATP and pathogenic bacteria type III secreted effector (T3SE) proteins (e.g. Pseudomonas syringae HopZ1a and HopF2a and Xanthomonas campestris pv. campestris (Xcc) XopAC/AvrAC) to form a wheel-like pentameric resistosome; this complex triggers immunity toward pathogenic bacteria (e.g. X.campestris and P.syringae), especially in vascular tissues. Interacts with RKS1, ZED1/ZRK5, ZRK3, ZRK6 and ZRK15.

Its subcellular location is the cell membrane. It localises to the nucleus. Its activity is regulated as follows. Exhibits autoinhibition activity. Its function is as follows. CC-NB-LRR receptor-like protein required for recognition of pathogenic bacteria type III effectors (T3E) such as Pseudomonas syringae HopZ1a and HopF2a and Xanthomonas campestris pv. campestris (Xcc) XopAC/AvrAC; this recognition requires ZED1-related kinases (e.g. PBL2, ZRK3 and ZED1/ZRK5). Confers allele-specific recognition and virulence attenuation of HopZ1a. Immunity mediated by RPP13L4/ZAR1 is independent of several genes required by other resistance protein signaling pathways such as NDR1 and RAR1. Together with ZED1/ZRK5, involved in the regulation of the ambient temperature-sensitive intersection of growth and immune response in the absence of pathogens. The polypeptide is Disease resistance RPP13-like protein 4 (RPP13L4) (Arabidopsis thaliana (Mouse-ear cress)).